Reading from the N-terminus, the 299-residue chain is Ethylmalonyl-CoA decarboxylase (299 aa).

It belongs to the enoyl-CoA hydratase/isomerase family.

Its subcellular location is the cytoplasm. It localises to the cytosol. It carries out the reaction (2S)-ethylmalonyl-CoA + H(+) = butanoyl-CoA + CO2. The enzyme catalyses (S)-methylmalonyl-CoA + H(+) = propanoyl-CoA + CO2. The catalysed reaction is (2R)-ethylmalonyl-CoA + H(+) = butanoyl-CoA + CO2. Its function is as follows. Decarboxylates ethylmalonyl-CoA, a potentially toxic metabolite, to form butyryl-CoA, suggesting it might be involved in metabolite proofreading. Acts preferentially on (S)-ethylmalonyl-CoA but also has some activity on the (R)-isomer. Also has methylmalonyl-CoA decarboxylase activity at lower level. This is Ethylmalonyl-CoA decarboxylase (echdc1) from Xenopus tropicalis (Western clawed frog).